A 131-amino-acid polypeptide reads, in one-letter code: Serum amyloid A-3 protein (131 aa).

An N-terminal signal peptide occupies residues 1-18 (MNLSTGIIFCFLILGVSS). Positions 94–105 (MTRDQVREDSKA) are enriched in basic and acidic residues. The segment at 94 to 131 (MTRDQVREDSKADQFANEWGRSGKDPNHFRPAGLPDKY) is disordered.

Belongs to the SAA family. Expressed in the liver. Expressed in mammary epithelial cells. Expressed at high levels in mammary ductal cells and vesicle engorged alveoli, but absent from stromal and connective tissue and leukocytes. Secreted into colostrum and mastitic milk (at protein level). Low expression levels, if any, in normal milk (at protein level).

The protein localises to the secreted. Functionally, major acute phase reactant. Apolipoprotein of the HDL complex. May have a role in protection of the mammary gland during remodeling and infection. In vitro exhibits antimicrobial activity against Escherichia coli, Streptococcus uberis and Pseudomonas aeruginosa. The protein is Serum amyloid A-3 protein (SAA3) of Bos taurus (Bovine).